A 113-amino-acid chain; its full sequence is uncharacterized protein (113 aa).

The interval 28 to 55 (CDGGPRRPLSRRGEEARRARAPSYEEQE) is disordered.

This is an uncharacterized protein from Human cytomegalovirus (strain AD169) (HHV-5).